The sequence spans 190 residues: Interferon alpha-9 (190 aa).

The signal sequence occupies residues 1 to 23 (MARPFAFLMVLVVISYWSTCSLG). 2 cysteine pairs are disulfide-bonded: C24–C122 and C52–C162. N101 carries an N-linked (GlcNAc...) asparagine glycan.

The protein belongs to the alpha/beta interferon family.

The protein resides in the secreted. Produced by macrophages, IFN-alpha have antiviral activities. Interferon stimulates the production of two enzymes: a protein kinase and an oligoadenylate synthetase. The polypeptide is Interferon alpha-9 (Ifna9) (Mus musculus (Mouse)).